Reading from the N-terminus, the 64-residue chain is Myotoxin-2 (64 aa).

An N-terminal signal peptide occupies residues 1–21 (KILYLLFAFLFLAFLSEPGNA). Cys-32 and Cys-51 form a disulfide bridge.

It belongs to the crotamine-myotoxin family. In terms of assembly, monomer. As to expression, expressed by the venom gland.

Its subcellular location is the secreted. Functionally, cationic peptide that possesses multiple functions. It acts as a cell-penetrating peptide (CPP), and as a potent voltage-gated potassium channel (Kv) inhibitor. It exhibits antimicrobial activities, hind limb paralysis, and severe muscle necrosis by a non-enzymatic mechanism. This Crotalus durissus terrificus (South American rattlesnake) protein is Myotoxin-2.